The sequence spans 456 residues: Outer membrane efflux protein BepC (456 aa).

Residues 1–28 (MRYTVFKACKELVAAAVLLSGTVLTGQA) form the signal peptide. Residues 312–341 (RTSAQIRQSKEQLGQARIEVDVVQDKVRQA) adopt a coiled-coil conformation.

This sequence belongs to the outer membrane factor (OMF) (TC 1.B.17) family. In terms of assembly, probably part of a tripartite efflux pump, which is composed of an outer membrane efflux protein, an inner membrane protein and a protein that expands the periplasmic space. Could form a tripartite pump with BepD and BepE or with BepF and BepG.

The protein resides in the cell outer membrane. Functionally, involved in the efflux of toxic and relatively hydrophobic compounds. Influences survival inside the host. In Brucella suis biovar 1 (strain 1330), this protein is Outer membrane efflux protein BepC (bepC).